Consider the following 185-residue polypeptide: Anterior gradient protein 2 (185 aa).

The first 18 residues, 1 to 18 (MQTGLSLACLVLLCSVLG), serve as a signal peptide directing secretion. The disordered stretch occupies residues 25-45 (PKRQAGATDTNGAAKSEPAPV).

This sequence belongs to the AGR family. As to expression, expressed in the anterior of the dorsal ectoderm from late gastrula stages onwards. Becomes restricted to the cement gland anlage at the onset of neurulation (stages 13 to 14) and expressed exclusively in the cement gland from stage 18 onwards, with transient expression in the hatching gland during tailbud stages.

Its subcellular location is the secreted. Involved in cement gland formation; probably specifies dorsal ectoderm to acquire an anterior fate such as cement gland and forebrain. Signals via the FGF pathway. In Xenopus laevis (African clawed frog), this protein is Anterior gradient protein 2 (ag2).